Here is a 294-residue protein sequence, read N- to C-terminus: 2-dehydro-3-deoxy-phosphogluconate/2-dehydro-3-deoxy-6-phosphogalactonate aldolase (294 aa).

Substrate-binding positions include 43 to 44 (TT), 130 to 132 (YNY), and 155 to 157 (KDT). Lysine 155 (schiff-base intermediate with substrate) is an active-site residue.

Belongs to the DapA family. KDPG aldolase subfamily. In terms of assembly, homotetramer; dimer of dimers.

The enzyme catalyses 2-dehydro-3-deoxy-6-phospho-D-gluconate = D-glyceraldehyde 3-phosphate + pyruvate. It carries out the reaction 2-dehydro-3-deoxy-6-phospho-D-galactonate = D-glyceraldehyde 3-phosphate + pyruvate. It participates in carbohydrate acid metabolism; 2-dehydro-3-deoxy-D-gluconate degradation; D-glyceraldehyde 3-phosphate and pyruvate from 2-dehydro-3-deoxy-D-gluconate: step 2/2. Functionally, involved in the degradation of glucose and galactose via the Entner-Doudoroff pathway. Catalyzes the reversible cleavage of 2-keto-3-deoxy-6-phosphogluconate (KDPG) and 2-keto-3-deoxygluconate (KDG) forming pyruvate and glyceraldehyde 3-phosphate or glyceraldehyde, respectively. It is also able to catalyze the reversible cleavage of 2-keto-3-deoxy-6-phosphogalactonate (KDPGal) and 2-keto-3-deoxygalactonate (KDGal). It is equally active with both D- and L-glyceraldehyde. The sequence is that of 2-dehydro-3-deoxy-phosphogluconate/2-dehydro-3-deoxy-6-phosphogalactonate aldolase from Saccharolobus solfataricus (Sulfolobus solfataricus).